The primary structure comprises 400 residues: D(3) dopamine receptor (400 aa).

Residues 1-32 (MASLSQLSGHLNYTCGAENSTGASQARPHAYY) lie on the Extracellular side of the membrane. 2 N-linked (GlcNAc...) asparagine glycosylation sites follow: Asn12 and Asn19. Residues 33-55 (ALSYCALILAIVFGNGLVCMAVL) form a helical membrane-spanning segment. The Cytoplasmic segment spans residues 56–65 (KERALQTTTN). Residues 66–88 (YLVVSLAVADLLVATLVMPWVVY) traverse the membrane as a helical segment. Over 89–104 (LEVTGGVWNFSRICCD) the chain is Extracellular. Asn97 is a glycosylation site (N-linked (GlcNAc...) asparagine). A disulfide bond links Cys103 and Cys181. A helical transmembrane segment spans residues 105–126 (VFVTLDVMMCTASILNLCAISI). Asp110 is an eticlopride binding site. The Cytoplasmic portion of the chain corresponds to 127–149 (DRYTAVVMPVHYQHGTGQSSCRR). Residues 150 to 170 (VALMITAVWVLAFAVSCPLLF) form a helical membrane-spanning segment. Over 171 to 187 (GFNTTGDPTVCSISNPD) the chain is Extracellular. Asn173 is a glycosylation site (N-linked (GlcNAc...) asparagine). Residues 188–209 (FVIYSSVVSFYLPFGVTVLVYA) form a helical membrane-spanning segment. Residues 210-329 (RIYVVLKQRR…VPLREKKATQ (120 aa)) lie on the Cytoplasmic side of the membrane. A helical membrane pass occupies residues 330-351 (MVAIVLGAFIVCWLPFFLTHVL). 2 residues coordinate eticlopride: Phe345 and His349. The Extracellular segment spans residues 352 to 366 (NTHCQTCHVSPELYS). A disulfide bridge connects residues Cys355 and Cys358. A helical membrane pass occupies residues 367-386 (ATTWLGYVNSALNPVIYTTF). Topologically, residues 387–400 (NIEFRKAFLKILSC) are cytoplasmic.

This sequence belongs to the G-protein coupled receptor 1 family. In terms of assembly, interacts with CLIC6. Interacts with GRK4. Interacts with PALM. Interacts with FLNA (via filamin repeat 21); increases PKA-mediated phosphorylation of FLNA. In terms of processing, phosphorylated by GRK4 (GRK4-alpha and GRK4-gamma). Post-translationally, palmitoylated. As to expression, brain.

It localises to the cell membrane. Dopamine receptor whose activity is mediated by G proteins which inhibit adenylyl cyclase. Promotes cell proliferation. This Homo sapiens (Human) protein is D(3) dopamine receptor.